A 450-amino-acid chain; its full sequence is Keratin, type I cytoskeletal 25 (450 aa).

Over residues 1–11 the composition is skewed to low complexity; sequence MSLRLSSASRR. Positions 1–20 are disordered; it reads MSLRLSSASRRSCPRPTTGS. The interval 1–78 is head; sequence MSLRLSSASR…VNERGLLSGN (78 aa). The segment at 79–114 is coil 1A; it reads EKVTMQNLNDRLASYLDSVHALEEANADLEQKIKGW. Residues 79-394 enclose the IF rod domain; the sequence is EKVTMQNLND…LLIGGDDGAC (316 aa). The segment at 115–136 is linker 1; sequence YEKFGPGSCRGLDHDYSRYFPI. The coil 1B stretch occupies residues 137 to 228; it reads IDDLKNQIIA…KNHKEEMQVL (92 aa). A linker 12 region spans residues 229-251; that stretch reads QCAAGGNVNVEMNAAPGVDLTVL. Residues 252–390 are coil 2; sequence LNNMRAEYEA…ETYCLLIGGD (139 aa). The interval 391–450 is tail; the sequence is DGACKSGGYKSKDYGSGNVGSQVKDPAKAIVVKKVLEEVDQRSKILTTRLHSLEEKSQSN. Ser442 is modified (phosphoserine).

The protein belongs to the intermediate filament family. As to quaternary structure, heterodimer of a type I and a type II keratin. Heterodimer with type II keratin KRT5 leading to the formation of keratin intermediate filament (KIF) network. Interacts with KRT6A to form filaments. In terms of tissue distribution, strongly expressed in skin and scalp, and weak expression observed in thymus and tongue. In the hair follicle, expressed in Henle layer, Huxley layer and in the inner root sheath cuticle of the hair follicle. Expression extends from the bulb region up to the point of differentiation into the three layers. Also present in the medulla of beard hair (at protein level).

The protein resides in the cytoplasm. In terms of biological role, essential for the proper assembly of type I and type II keratin protein complexes and formation of keratin intermediate filaments in the inner root sheath (irs). Plays a role in the cytoskeleton organization. In Homo sapiens (Human), this protein is Keratin, type I cytoskeletal 25.